A 1396-amino-acid chain; its full sequence is Melanoma inhibitory activity protein 2 (1396 aa).

Positions 1 to 22 are cleaved as a signal peptide; it reads MAEVSVQRILLLVVSLAKCLEG. Over 23-604 the chain is Lumenal; the sequence is TKLLAHLKKC…YGFMSSALSP (582 aa). The 63-residue stretch at 39–101 folds into the SH3 domain; it reads TLISRVLALR…PRDAVEIEEV (63 aa). N-linked (GlcNAc...) asparagine glycosylation is present at asparagine 59. Disordered regions lie at residues 197 to 288 and 331 to 361; these read EGAG…VPDE and ESNP…TDKE. Positions 243–258 are enriched in acidic residues; sequence SDTEPTQELALEEESD. N-linked (GlcNAc...) asparagine glycosylation is present at asparagine 366. Disordered regions lie at residues 396 to 421 and 525 to 557; these read DKGE…PEKE and PMEE…ELSV. Residues 605–625 lie within the membrane without spanning it; that stretch reads IEILLESVVAALPEDMRADFN. At 626-628 the chain is on the lumenal side; the sequence is PSG. A helical transmembrane segment spans residues 629–649; it reads FSLELAVCVLSVGLLAVVLFL. Topologically, residues 650 to 1396 are cytoplasmic; that stretch reads WRGFRSIRSR…AADPPETQEA (747 aa). The mediates interaction with MIA3 stretch occupies residues 651 to 1243; sequence RGFRSIRSRF…RSYNMPSLDK (593 aa). Coiled-coil stretches lie at residues 693–867 and 914–1082; these read YEGL…LVTS and AAKL…NRQK. Positions 1103-1396 are disordered; sequence PNTAFGREHS…AADPPETQEA (294 aa). A proline-rich domain (PRD); probably mediates interaction with COPII coat subunits region spans residues 1105-1396; the sequence is TAFGREHSPY…AADPPETQEA (292 aa). A compositionally biased stretch (low complexity) spans 1135–1146; sequence LLEGPLRLSPLL. Residues 1165–1179 are compositionally biased toward basic and acidic residues; that stretch reads MNTERGESSYDRLSD. Residues 1252 to 1269 are compositionally biased toward polar residues; that stretch reads MESSGNGTKDNLGNSNVP. Composition is skewed to pro residues over residues 1331–1342 and 1351–1368; these read RDFPGPPLPPFP and GFPP…PPPH.

This sequence belongs to the MIA/OTOR family. Interacts with MIA3. Interacts with the COPII coat subunits SEC23A, SEC23B and maybe SEC24C. Interacts with PREB; recruits PREB to endoplasmic reticulum exit sites. Interacts with APOB. Isoform 1 is expressed in liver (at protein level). Isoform 2 is highly expressed in liver and weakly in testis.

It localises to the endoplasmic reticulum membrane. Its function is as follows. Plays a role in the transport of cargos that are too large to fit into COPII-coated vesicles and require specific mechanisms to be incorporated into membrane-bound carriers and exported from the endoplasmic reticulum. Plays a role in the secretion of lipoproteins, pre-chylomicrons and pre-VLDLs, by participating in their export from the endoplasmic reticulum. Thereby, may play a role in cholesterol and triglyceride homeostasis. Required for collagen VII (COL7A1) secretion by loading COL7A1 into transport carriers and recruiting PREB/SEC12 at the endoplasmic reticulum exit sites. The sequence is that of Melanoma inhibitory activity protein 2 from Mus musculus (Mouse).